The chain runs to 339 residues: Peroxidase 29 (339 aa).

Residues 1–28 (MKPKSKVAESTAASCFLVMSLLCSCIIG) form the signal peptide. Disulfide bonds link C47–C127, C80–C85, C133–C335, and C213–C242. The active-site Proton acceptor is H78. Ca(2+) contacts are provided by D79, V82, G84, D86, and S88. P176 is a substrate binding site. H206 serves as a coordination point for heme b. T207 is a binding site for Ca(2+). N224 carries N-linked (GlcNAc...) asparagine glycosylation. The Ca(2+) site is built by D260, T262, and D267.

This sequence belongs to the peroxidase family. Classical plant (class III) peroxidase subfamily. It depends on heme b as a cofactor. Requires Ca(2+) as cofactor.

Its subcellular location is the secreted. It carries out the reaction 2 a phenolic donor + H2O2 = 2 a phenolic radical donor + 2 H2O. In terms of biological role, removal of H(2)O(2), oxidation of toxic reductants, biosynthesis and degradation of lignin, suberization, auxin catabolism, response to environmental stresses such as wounding, pathogen attack and oxidative stress. These functions might be dependent on each isozyme/isoform in each plant tissue. In Arabidopsis thaliana (Mouse-ear cress), this protein is Peroxidase 29 (PER29).